A 247-amino-acid polypeptide reads, in one-letter code: 2,3-bisphosphoglycerate-dependent phosphoglycerate mutase (247 aa).

Substrate contacts are provided by residues 8 to 15, 21 to 22, Arg60, 87 to 90, Lys98, 114 to 115, and 183 to 184; these read RHGESTWN, TG, ERHY, RR, and GN. His9 functions as the Tele-phosphohistidine intermediate in the catalytic mechanism. The Proton donor/acceptor role is filled by Glu87.

This sequence belongs to the phosphoglycerate mutase family. BPG-dependent PGAM subfamily. Homodimer.

The catalysed reaction is (2R)-2-phosphoglycerate = (2R)-3-phosphoglycerate. The protein operates within carbohydrate degradation; glycolysis; pyruvate from D-glyceraldehyde 3-phosphate: step 3/5. Functionally, catalyzes the interconversion of 2-phosphoglycerate and 3-phosphoglycerate. This chain is 2,3-bisphosphoglycerate-dependent phosphoglycerate mutase, found in Albidiferax ferrireducens (strain ATCC BAA-621 / DSM 15236 / T118) (Rhodoferax ferrireducens).